A 261-amino-acid chain; its full sequence is Small ribosomal subunit protein uS2 (261 aa).

The residue at position 2 (serine 2) is an N-acetylserine. The segment at 211–261 (EQNAAEDSKAEDAEEAPVADAEPDWSGETEDVDWAESGATPAAEEAAASNW) is disordered. A compositionally biased stretch (acidic residues) spans 222 to 244 (DAEEAPVADAEPDWSGETEDVDW). Over residues 245-261 (AESGATPAAEEAAASNW) the composition is skewed to low complexity.

The protein belongs to the universal ribosomal protein uS2 family. Component of the small ribosomal subunit. Mature ribosomes consist of a small (40S) and a large (60S) subunit. The 40S subunit contains about 33 different proteins and 1 molecule of RNA (18S). The 60S subunit contains about 49 different proteins and 3 molecules of RNA (25S, 5.8S and 5S). Interacts with RPS21.

Its subcellular location is the cytoplasm. In terms of biological role, required for the assembly and/or stability of the 40S ribosomal subunit. Required for the processing of the 20S rRNA-precursor to mature 18S rRNA in a late step of the maturation of 40S ribosomal subunits. This chain is Small ribosomal subunit protein uS2, found in Meyerozyma guilliermondii (strain ATCC 6260 / CBS 566 / DSM 6381 / JCM 1539 / NBRC 10279 / NRRL Y-324) (Yeast).